Here is a 499-residue protein sequence, read N- to C-terminus: Leukocyte immunoglobulin-like receptor subfamily A member 4 (499 aa).

A signal peptide spans 1-23 (MTLILTSLLFFGLSLGPRTRVQA). 4 consecutive Ig-like C2-type domains span residues 24–118 (ENLL…LVVT), 123–213 (PTLS…SDPL), 224–313 (PSLL…DPLD), and 324–413 (PSLS…SEPL). Residues 24–446 (ENLLKPILWA…PHLQDYTVEN (423 aa)) lie on the Extracellular side of the membrane. A disulfide bridge connects residues cysteine 49 and cysteine 98. The N-linked (GlcNAc...) asparagine glycan is linked to asparagine 138. A disulfide bridge connects residues cysteine 143 and cysteine 195. 3 N-linked (GlcNAc...) asparagine glycosylation sites follow: asparagine 239, asparagine 279, and asparagine 300. A disulfide bond links cysteine 244 and cysteine 295. Residues cysteine 344 and cysteine 395 are joined by a disulfide bond. Tyrosine 404 carries the 3'-nitrotyrosine modification. Residues 447-467 (LIRMGVAGLVLLFLGILLFEA) traverse the membrane as a helical segment. Over 468–499 (QHSQRSPPRCSQEANSRKDNAPFRVVEPWEQI) the chain is Cytoplasmic.

Interacts with FCER1G; this stabilizes the expression of both proteins at the cell membrane. Interacts with BST2; leads to activation of LILRA4-mediated signaling and down-regulation of the innate immune response to viral pathogens. As to expression, detected on plasmacytoid dendritic cells (at protein level). Detected on plasmacytoid dendritic cells, but not on monocytes or B cells.

The protein resides in the cell membrane. In terms of biological role, functions coreceptor to limit the innate immune responses to viral infections; signaling occurs via FCER1G. Down-regulates the production of IFNA1, IFNA2, IFNA4, IFNB1 and TNF by plasmacytoid dendritic cells that have been exposed to influenza virus or cytidine-phosphate-guanosine (CpG) dinucleotides, indicating it functions as a negative regulator of TLR7 and TLR9 signaling cascades. Down-regulates interferon production in response to interaction with BST2 on HIV-1 infected cells. Activates a signaling cascade in complex with FCER1G that results in phosphorylation of Src family and Syk kinases and thereby triggers mobilization of intracellular Ca(2+). Does not interfere with the differentiation of plasmacytoid dendritic cells into antigen-presenting cells. The protein is Leukocyte immunoglobulin-like receptor subfamily A member 4 of Homo sapiens (Human).